A 308-amino-acid polypeptide reads, in one-letter code: Mannan endo-1,4-beta-mannosidase (308 aa).

The active-site Proton donor is the glutamate 125. The active-site Nucleophile is the glutamate 220. A disordered region spans residues 284-308 (DGLQETSKPSTVFTDDNGGHPEPPT). The segment covering 287 to 297 (QETSKPSTVFT) has biased composition (polar residues).

It belongs to the glycosyl hydrolase 5 (cellulase A) family.

It catalyses the reaction Random hydrolysis of (1-&gt;4)-beta-D-mannosidic linkages in mannans, galactomannans and glucomannans.. Catalyzes the endo hydrolysis of beta-1,4-linked mannan, galactomannan and glucomannan. It is able to hydrolyze mannosidic linkages that are flanked by mannose or glucose. The chain is Mannan endo-1,4-beta-mannosidase from Salipaludibacillus agaradhaerens (Bacillus agaradhaerens).